A 562-amino-acid polypeptide reads, in one-letter code: MDDNKRPLYLPFAGPAILEAPLINKGSAFTDEERIFFNLEGLLPHVIETIEEQASRAYDQYKNFSNDLDKHIYLRNIQDTNETLYYRLVQNHITEMMPIIYTPTVGMACERFSKDYRRNRGLFISYANKDRIDDILNNSTRQKVKIIVVTDGERILGLGDQGIGGMGIPIGKLSLYTSCGGISPAYTLPITLDVGTDNPHLLEDPMYMGMRSPRIGGEEYTEFVEAFMQAVHRRWPDALIQFEDFAQKNAMPLLERYKDQYCCFNDDIQGTAAVTVGSLLAACKAAKTQLSEQRITFLGAGSAGCGIAEAIVAQMVSEGISEAQARKQVFMVDRWGMLQSNMPNLLPFQQKLAQNCDDITSWDNFSDNISLLDVVNNAKPTVLIGVSGAPGLFTEEIIKAMHSHCKRPIVFPLSNPTSRVEATPKDILHWTQGQALVATGSPFEPVVVDDVTYEIAQCNNSYIFPGIGLGVLASGAKRVSDAMLMASSRALAECSPLAIDGEGSLLPKLEDIHKVSKHIAFAVARTAIEEGHALPTTNELLTYAIEDNFWTAEYRSYKRTAF.

The active-site Proton donor is Tyr-101. Arg-154 lines the NAD(+) pocket. Residue Lys-172 is the Proton acceptor of the active site. A divalent metal cation contacts are provided by Glu-243, Asp-244, and Asp-267. Residues Asp-267 and Asn-415 each contribute to the NAD(+) site.

It belongs to the malic enzymes family. Homotetramer. It depends on Mg(2+) as a cofactor. Requires Mn(2+) as cofactor.

It catalyses the reaction (S)-malate + NAD(+) = pyruvate + CO2 + NADH. The catalysed reaction is oxaloacetate + H(+) = pyruvate + CO2. The chain is NAD-dependent malic enzyme from Shewanella pealeana (strain ATCC 700345 / ANG-SQ1).